The chain runs to 59 residues: Gonadotropin-releasing hormone receptor (59 aa).

The Cytoplasmic segment spans residues 1-2 (VA). Residues 3-23 (FATSFTVCWTPYYVLGIWYWF) form a helical membrane-spanning segment. Residues 24–37 (DPEMLNRVSDPVNH) lie on the Extracellular side of the membrane. A helical transmembrane segment spans residues 38-58 (FFFLFAFLNPCFDPLIYGYFS). A topological domain (cytoplasmic) is located at residue leucine 59.

It belongs to the G-protein coupled receptor 1 family.

The protein resides in the cell membrane. In terms of biological role, receptor for gonadotropin releasing hormone (GnRH) that mediates the action of GnRH to stimulate the secretion of the gonadotropic hormones luteinizing hormone (LH) and follicle-stimulating hormone (FSH). This receptor mediates its action by association with G-proteins that activate a phosphatidylinositol-calcium second messenger system. The chain is Gonadotropin-releasing hormone receptor (GNRHR) from Macaca mulatta (Rhesus macaque).